A 393-amino-acid chain; its full sequence is Protein FAM47E (393 aa).

Residues 326–354 (VSHKAQEENFKKELQEQEELLADLHGTVA) adopt a coiled-coil conformation.

This sequence belongs to the FAM47 family. In terms of assembly, interacts with PRMT5; the interaction is direct. Interacts with WDR77.

Its subcellular location is the nucleus. The protein resides in the chromosome. It localises to the cytoplasm. Its function is as follows. Promotes histone methylation by localizing the arginine methyltransferase PRMT5 to chromatin. The protein is Protein FAM47E (FAM47E) of Homo sapiens (Human).